A 37-amino-acid chain; its full sequence is Large ribosomal subunit protein bL36 (37 aa).

This sequence belongs to the bacterial ribosomal protein bL36 family.

This Dictyoglomus thermophilum (strain ATCC 35947 / DSM 3960 / H-6-12) protein is Large ribosomal subunit protein bL36.